We begin with the raw amino-acid sequence, 158 residues long: Large ribosomal subunit protein uL16 (158 aa).

This sequence belongs to the universal ribosomal protein uL16 family. Part of the 50S ribosomal subunit.

Binds 23S rRNA and is also seen to make contacts with the A and possibly P site tRNAs. The polypeptide is Large ribosomal subunit protein uL16 (Prochlorococcus marinus (strain MIT 9313)).